The chain runs to 96 residues: MNKYYDLVKAPIITELTNKLIERQNKYTFKVAKTANKVEIKKALESIFQVKVLSVNTRNVLPQFKRKGKFEGYTSGYKKAICKLAPGQKIKILANE.

This sequence belongs to the universal ribosomal protein uL23 family. Part of the 50S ribosomal subunit. Contacts protein L29, and trigger factor when it is bound to the ribosome.

Its function is as follows. One of the early assembly proteins it binds 23S rRNA. One of the proteins that surrounds the polypeptide exit tunnel on the outside of the ribosome. Forms the main docking site for trigger factor binding to the ribosome. In Aster yellows witches'-broom phytoplasma (strain AYWB), this protein is Large ribosomal subunit protein uL23.